The following is a 59-amino-acid chain: Ribosome modulation factor (59 aa).

Belongs to the ribosome modulation factor family.

Its subcellular location is the cytoplasm. Functionally, during stationary phase, converts 70S ribosomes to an inactive dimeric form (100S ribosomes). The chain is Ribosome modulation factor from Aeromonas veronii (strain B565).